Consider the following 336-residue polypeptide: Inositol 2-dehydrogenase (336 aa).

This sequence belongs to the Gfo/Idh/MocA family. As to quaternary structure, homotetramer.

The enzyme catalyses myo-inositol + NAD(+) = scyllo-inosose + NADH + H(+). Its function is as follows. Involved in the oxidation of myo-inositol (MI) to 2-keto-myo-inositol (2KMI or 2-inosose). The chain is Inositol 2-dehydrogenase from Paracoccus denitrificans (strain Pd 1222).